A 476-amino-acid chain; its full sequence is Riboflavin transporter rft-2 (476 aa).

Residues 1 to 21 form a helical membrane-spanning segment; that stretch reads MGCSAATFILVALFGSSSWMG. Residues 22–41 are Cytoplasmic-facing; it reads TNSVWMQLPLLTSELPEQWN. Residues 42-62 traverse the membrane as a helical segment; the sequence is LPSYLAGVVQIACIVPLIYTI. At 63 to 75 the chain is on the extracellular side; it reads LHKGVKSFTIPTA. The chain crosses the membrane as a helical span at residues 76–96; sequence PLIIALLSLACCCQLGLSFFW. The Cytoplasmic portion of the chain corresponds to 97–113; sequence SDYSEIFGAPRSWPLYS. The helical transmembrane segment at 114–134 threads the bilayer; sequence LLFGLAIVNAMSNVLFMPFMA. At 135–140 the chain is on the extracellular side; the sequence is QFHPAY. Residues 141-161 form a helical membrane-spanning segment; it reads LNAYFVGMGLSSLAPSLLSLA. The Cytoplasmic segment spans residues 162–185; the sequence is QGTSMFKCDEKGVAERFPPNFSVS. A helical membrane pass occupies residues 186–206; sequence IFFFVIFSFTCVALFAFIALY. At 207–306 the chain is on the extracellular side; it reads RSGAHTHFAT…HPVDYITGVK (100 aa). A disordered region spans residues 215 to 249; that stretch reads ATPNKKEPNEGTPLKKDLNNTSSSRKGDDEDESPI. Residues 218-232 are compositionally biased toward basic and acidic residues; the sequence is NKKEPNEGTPLKKDL. Asparagine 233 carries N-linked (GlcNAc...) asparagine glycosylation. The helical transmembrane segment at 307–327 threads the bilayer; that stretch reads FTFLLFTTALVNAQMNGIITS. At 328-342 the chain is on the cytoplasmic side; it reads VQSYAALPYSQATYH. Residues 343–363 form a helical membrane-spanning segment; sequence FAVTLSNVVSPLSSFLPFFIS. The Extracellular portion of the chain corresponds to 364–366; sequence VRS. The helical transmembrane segment at 367 to 387 threads the bilayer; that stretch reads IPVLAILTACSTAMTAFIVYL. The Cytoplasmic portion of the chain corresponds to 388 to 393; that stretch reads AALSPN. The chain crosses the membrane as a helical span at residues 394–414; the sequence is LIFNSVTIGSALSIGGSLIAA. Over 415–437 the chain is Extracellular; it reads GLHSYLRVVFASLLREGHQSESR. A helical transmembrane segment spans residues 438–458; that stretch reads LFWCGVFIQIGSFIGSAVMFP. Residues 459–476 are Cytoplasmic-facing; it reads LVNIAHLFTSAPQCKSIS.

The protein belongs to the riboflavin transporter family. In terms of tissue distribution, expressed in intestine and pharynx.

The protein localises to the cell membrane. The catalysed reaction is riboflavin(in) = riboflavin(out). Riboflavin transporter. The sequence is that of Riboflavin transporter rft-2 from Caenorhabditis elegans.